Here is a 299-residue protein sequence, read N- to C-terminus: Ribosomal protein L11 methyltransferase (299 aa).

Positions 139, 163, 185, and 232 each coordinate S-adenosyl-L-methionine.

Belongs to the methyltransferase superfamily. PrmA family.

The protein localises to the cytoplasm. The catalysed reaction is L-lysyl-[protein] + 3 S-adenosyl-L-methionine = N(6),N(6),N(6)-trimethyl-L-lysyl-[protein] + 3 S-adenosyl-L-homocysteine + 3 H(+). In terms of biological role, methylates ribosomal protein L11. This is Ribosomal protein L11 methyltransferase from Crocosphaera subtropica (strain ATCC 51142 / BH68) (Cyanothece sp. (strain ATCC 51142)).